Reading from the N-terminus, the 487-residue chain is MASYSIILSVGGTSINKYPGKQHARRVAAYLPKHQGLIYLPGQQTVLSEDSDQARPFKQRRYFFYVTGVVEPDCHVTYDIAEDKLTLYVPDFDFKRTIWTGPTLGKDEASQRHVEYYSSLEGDVQRWSQGNPSSPIYILHPDQRPVTPLTVAYLYESKSLKHAMDACRVIKDEHEVQLIQRANRVSGAAHRSILANLRHFKNEAQIAGLFIDVCLSLRSKGTAYETIAGSGSNGATLHYTRNNEPLAGRQMVVLDAGAEWSCYASDVTRSFPIPSSVRGGGDWPSREAEQIYTIVQRMQEECISRVKEGALFFSIHQHAHAVALEELLKLGILRIPRGSTKADLIKAEATALFFPHGLGHHLGLEVHDVSPDSGTIPLDLAIACQNGLMSVTEHRPPCTLSAPPLASGMVITVEPGLYFNRLAINQAREERDKPDSKGRFVNFDVVERYVDVGGVRIEDDVLVTKNGNRNLTDAPKGREMLDLIYGR.

Mn(2+) contacts are provided by Asp-255, Asp-266, Glu-414, and Glu-458.

Belongs to the peptidase M24B family. It depends on Mn(2+) as a cofactor.

The catalysed reaction is Release of any N-terminal amino acid, including proline, that is linked to proline, even from a dipeptide or tripeptide.. Functionally, catalyzes the removal of a penultimate prolyl residue from the N-termini of peptides. The chain is Probable Xaa-Pro aminopeptidase MGYG_06974 from Arthroderma gypseum (strain ATCC MYA-4604 / CBS 118893) (Microsporum gypseum).